The sequence spans 604 residues: Putative sodium-dependent multivitamin transporter (604 aa).

6 helical membrane-spanning segments follow: residues 4 to 24, 48 to 68, 78 to 98, 134 to 154, 160 to 180, and 188 to 208; these read LGAW…AIGI, VAPV…ILGV, MFVV…YLII, VLYM…VTGL, IVIV…KAVL, and LLMF…AGSL. Residues asparagine 222 and asparagine 225 are each glycosylated (N-linked (GlcNAc...) asparagine). Helical transmembrane passes span 234–254, 273–293, 331–351, 389–409, 413–433, 440–460, and 511–531; these read HTWF…YGVN, ALWW…FSGL, LAGL…SSII, LFFG…GGLL, LSIF…GMYV, GAIG…FGQP, and ALGF…FALL.

Belongs to the sodium:solute symporter (SSF) (TC 2.A.21) family.

The protein localises to the cell membrane. In Drosophila melanogaster (Fruit fly), this protein is Putative sodium-dependent multivitamin transporter.